The chain runs to 325 residues: D-alanine--D-alanine ligase (325 aa).

The ATP-grasp domain maps to Lys-107–Lys-311. Val-137–Thr-192 serves as a coordination point for ATP. 3 residues coordinate Mg(2+): Asp-264, Glu-278, and Asn-280.

It belongs to the D-alanine--D-alanine ligase family. The cofactor is Mg(2+). Requires Mn(2+) as cofactor.

The protein localises to the cytoplasm. It catalyses the reaction 2 D-alanine + ATP = D-alanyl-D-alanine + ADP + phosphate + H(+). It functions in the pathway cell wall biogenesis; peptidoglycan biosynthesis. Its function is as follows. Cell wall formation. This is D-alanine--D-alanine ligase from Polaromonas naphthalenivorans (strain CJ2).